The primary structure comprises 140 residues: Sec-independent protein translocase protein TatB (140 aa).

The chain crosses the membrane as a helical span at residues 2–22; sequence LPGIGFSELLLIGLAALIIIG. The disordered stretch occupies residues 90 to 140; it reads VNSAVMREHPVSPPPPATPPAPPAELPPEAAPHADSQNAPPEADPAKGDRT. A compositionally biased stretch (pro residues) spans 100 to 119; the sequence is VSPPPPATPPAPPAELPPEA.

This sequence belongs to the TatB family. In terms of assembly, the Tat system comprises two distinct complexes: a TatABC complex, containing multiple copies of TatA, TatB and TatC subunits, and a separate TatA complex, containing only TatA subunits. Substrates initially bind to the TatABC complex, which probably triggers association of the separate TatA complex to form the active translocon.

It localises to the cell inner membrane. Part of the twin-arginine translocation (Tat) system that transports large folded proteins containing a characteristic twin-arginine motif in their signal peptide across membranes. Together with TatC, TatB is part of a receptor directly interacting with Tat signal peptides. TatB may form an oligomeric binding site that transiently accommodates folded Tat precursor proteins before their translocation. The polypeptide is Sec-independent protein translocase protein TatB (Hyphomonas neptunium (strain ATCC 15444)).